A 134-amino-acid chain; its full sequence is MATKMAGVKRAGRKRKERKNIERGAAHIRSTFNNTIVTITDVEGNTISWSSAGTLGFRGSRKSTPFAAQMAAEAAAKAAMEHGLKTVEVYVKGPGSGREAAIRALQAAGLEVSLIKDVTPIPHNGCRPPKRRRV.

The tract at residues 1–24 is disordered; it reads MATKMAGVKRAGRKRKERKNIERG.

It belongs to the universal ribosomal protein uS11 family. As to quaternary structure, part of the 30S ribosomal subunit. Interacts with proteins S7 and S18. Binds to IF-3.

Located on the platform of the 30S subunit, it bridges several disparate RNA helices of the 16S rRNA. Forms part of the Shine-Dalgarno cleft in the 70S ribosome. The sequence is that of Small ribosomal subunit protein uS11 from Acetivibrio thermocellus (strain ATCC 27405 / DSM 1237 / JCM 9322 / NBRC 103400 / NCIMB 10682 / NRRL B-4536 / VPI 7372) (Clostridium thermocellum).